A 319-amino-acid chain; its full sequence is tRNA (guanine-N(7)-)-methyltransferase (319 aa).

The tract at residues 1–44 is disordered; it reads MSESPETPEPSPAQSPEAAPEQPQAARPVTPGSQASFGTYGGRP. Residues 14–26 show a composition bias toward low complexity; it reads QSPEAAPEQPQAA. Residues Glu-103, Glu-128, Asn-155, and Asp-178 each coordinate S-adenosyl-L-methionine. Asp-178 is a catalytic residue. Substrate-binding residues include Lys-182 and Asp-214. Positions 262–288 are disordered; that stretch reads APVKEGRAPVSTEHTGPNEGVDETGGW. 298–301 serves as a coordination point for substrate; it reads TSFE.

The protein belongs to the class I-like SAM-binding methyltransferase superfamily. TrmB family.

The catalysed reaction is guanosine(46) in tRNA + S-adenosyl-L-methionine = N(7)-methylguanosine(46) in tRNA + S-adenosyl-L-homocysteine. It participates in tRNA modification; N(7)-methylguanine-tRNA biosynthesis. In terms of biological role, catalyzes the formation of N(7)-methylguanine at position 46 (m7G46) in tRNA. The sequence is that of tRNA (guanine-N(7)-)-methyltransferase from Arthrobacter sp. (strain FB24).